The primary structure comprises 439 residues: Methylenetetrahydrofolate--tRNA-(uracil-5-)-methyltransferase TrmFO (439 aa).

Glycine 8–glycine 13 is an FAD binding site.

This sequence belongs to the MnmG family. TrmFO subfamily. The cofactor is FAD.

The protein localises to the cytoplasm. The catalysed reaction is uridine(54) in tRNA + (6R)-5,10-methylene-5,6,7,8-tetrahydrofolate + NADH + H(+) = 5-methyluridine(54) in tRNA + (6S)-5,6,7,8-tetrahydrofolate + NAD(+). It catalyses the reaction uridine(54) in tRNA + (6R)-5,10-methylene-5,6,7,8-tetrahydrofolate + NADPH + H(+) = 5-methyluridine(54) in tRNA + (6S)-5,6,7,8-tetrahydrofolate + NADP(+). Its function is as follows. Catalyzes the folate-dependent formation of 5-methyl-uridine at position 54 (M-5-U54) in all tRNAs. This is Methylenetetrahydrofolate--tRNA-(uracil-5-)-methyltransferase TrmFO from Lacticaseibacillus paracasei (strain ATCC 334 / BCRC 17002 / CCUG 31169 / CIP 107868 / KCTC 3260 / NRRL B-441) (Lactobacillus paracasei).